Reading from the N-terminus, the 474-residue chain is tRNA-2-methylthio-N(6)-dimethylallyladenosine synthase (474 aa).

Residues 3–120 (KKLHIKTWGC…LPDMIEQVRR (118 aa)) enclose the MTTase N-terminal domain. Positions 12, 49, 83, 157, 161, and 164 each coordinate [4Fe-4S] cluster. The region spanning 143–375 (RAEGPTAFVS…QDRITQQAMR (233 aa)) is the Radical SAM core domain. In terms of domain architecture, TRAM spans 378–441 (RHMMGTVQRI…TNSLRGKFIR (64 aa)).

The protein belongs to the methylthiotransferase family. MiaB subfamily. As to quaternary structure, monomer. The cofactor is [4Fe-4S] cluster.

Its subcellular location is the cytoplasm. It carries out the reaction N(6)-dimethylallyladenosine(37) in tRNA + (sulfur carrier)-SH + AH2 + 2 S-adenosyl-L-methionine = 2-methylsulfanyl-N(6)-dimethylallyladenosine(37) in tRNA + (sulfur carrier)-H + 5'-deoxyadenosine + L-methionine + A + S-adenosyl-L-homocysteine + 2 H(+). Catalyzes the methylthiolation of N6-(dimethylallyl)adenosine (i(6)A), leading to the formation of 2-methylthio-N6-(dimethylallyl)adenosine (ms(2)i(6)A) at position 37 in tRNAs that read codons beginning with uridine. This Shewanella sp. (strain W3-18-1) protein is tRNA-2-methylthio-N(6)-dimethylallyladenosine synthase.